The chain runs to 533 residues: GMP synthase [glutamine-hydrolyzing] (533 aa).

Positions Ser-25–Asn-215 constitute a Glutamine amidotransferase type-1 domain. Cys-102 functions as the Nucleophile in the catalytic mechanism. Active-site residues include His-189 and Glu-191. Residues Trp-216–Arg-408 enclose the GMPS ATP-PPase domain. Ser-243–Ala-249 contacts ATP.

Homodimer.

The enzyme catalyses XMP + L-glutamine + ATP + H2O = GMP + L-glutamate + AMP + diphosphate + 2 H(+). Its pathway is purine metabolism; GMP biosynthesis; GMP from XMP (L-Gln route): step 1/1. In terms of biological role, catalyzes the synthesis of GMP from XMP. The protein is GMP synthase [glutamine-hydrolyzing] of Dehalococcoides mccartyi (strain ATCC BAA-2266 / KCTC 15142 / 195) (Dehalococcoides ethenogenes (strain 195)).